Consider the following 452-residue polypeptide: Bifunctional protein GlmU (452 aa).

The interval 1–226 (MSLAVVILAA…GWEVDGVNDR (226 aa)) is pyrophosphorylase. UDP-N-acetyl-alpha-D-glucosamine contacts are provided by residues 8–11 (LAAG), K22, Q73, 78–79 (GT), 99–101 (YGD), G136, E151, N166, and N224. Position 101 (D101) interacts with Mg(2+). N224 is a binding site for Mg(2+). A linker region spans residues 227–247 (VQLARLERIYQQAQAETLMRD). The interval 248 to 452 (GVTLLDPSRL…VANWQRPKKG (205 aa)) is N-acetyltransferase. 2 residues coordinate UDP-N-acetyl-alpha-D-glucosamine: R330 and K348. Residue H360 is the Proton acceptor of the active site. UDP-N-acetyl-alpha-D-glucosamine is bound by residues Y363 and N374. Acetyl-CoA is bound by residues A377, 383–384 (NY), S402, A420, and R437.

It in the N-terminal section; belongs to the N-acetylglucosamine-1-phosphate uridyltransferase family. This sequence in the C-terminal section; belongs to the transferase hexapeptide repeat family. Homotrimer. Mg(2+) serves as cofactor.

It is found in the cytoplasm. It carries out the reaction alpha-D-glucosamine 1-phosphate + acetyl-CoA = N-acetyl-alpha-D-glucosamine 1-phosphate + CoA + H(+). The enzyme catalyses N-acetyl-alpha-D-glucosamine 1-phosphate + UTP + H(+) = UDP-N-acetyl-alpha-D-glucosamine + diphosphate. It participates in nucleotide-sugar biosynthesis; UDP-N-acetyl-alpha-D-glucosamine biosynthesis; N-acetyl-alpha-D-glucosamine 1-phosphate from alpha-D-glucosamine 6-phosphate (route II): step 2/2. Its pathway is nucleotide-sugar biosynthesis; UDP-N-acetyl-alpha-D-glucosamine biosynthesis; UDP-N-acetyl-alpha-D-glucosamine from N-acetyl-alpha-D-glucosamine 1-phosphate: step 1/1. It functions in the pathway bacterial outer membrane biogenesis; LPS lipid A biosynthesis. Catalyzes the last two sequential reactions in the de novo biosynthetic pathway for UDP-N-acetylglucosamine (UDP-GlcNAc). The C-terminal domain catalyzes the transfer of acetyl group from acetyl coenzyme A to glucosamine-1-phosphate (GlcN-1-P) to produce N-acetylglucosamine-1-phosphate (GlcNAc-1-P), which is converted into UDP-GlcNAc by the transfer of uridine 5-monophosphate (from uridine 5-triphosphate), a reaction catalyzed by the N-terminal domain. This is Bifunctional protein GlmU from Alcanivorax borkumensis (strain ATCC 700651 / DSM 11573 / NCIMB 13689 / SK2).